A 212-amino-acid polypeptide reads, in one-letter code: Thymidylate kinase (212 aa).

Position 10–17 (10–17 (GPDGAGKT)) interacts with ATP.

This sequence belongs to the thymidylate kinase family.

The enzyme catalyses dTMP + ATP = dTDP + ADP. In terms of biological role, phosphorylation of dTMP to form dTDP in both de novo and salvage pathways of dTTP synthesis. The chain is Thymidylate kinase from Exiguobacterium sibiricum (strain DSM 17290 / CCUG 55495 / CIP 109462 / JCM 13490 / 255-15).